We begin with the raw amino-acid sequence, 122 residues long: MNKGSIFKMDNDFEKRKAEAGRIREKYPDRIPVIVEKAEKSEVPNIDKKKYLVPSDLTVGQFVYVIRKRIKLSAEKAIFIFVDNVLPPTGELMSSVYEDKKDEDGFLYITYSGENTFGASSI.

A lipid anchor (Phosphatidylethanolamine amidated glycine) is attached at Gly-118. Residues Ala-119–Ile-122 constitute a propeptide, removed in mature form.

The protein belongs to the ATG8 family. In terms of assembly, interacts with ATG4. Interacts with SH3P2. Interacts with ATG1A and ATG11. Binds to ATG1A and ATG11 on autophagic vesicles. In terms of processing, the C-terminal 4 residues are removed by ATG4 to expose Gly-118 at the C-terminus. This Gly-118 forms then a thioester bond with the 'Cys-558' of ATG7 (E1-like activating enzyme) before being transferred to the 'Cys-258' of ATG3 (the specific E2 conjugating enzyme), in order to be finally amidated with phosphatidylethanolamine. This lipid modification anchors ATG8 to autophagosomes. In terms of tissue distribution, constitutively expressed.

It is found in the cytoplasmic vesicle. It localises to the autophagosome membrane. The protein resides in the vacuole membrane. Its subcellular location is the cytoplasm. The protein localises to the cytoskeleton. Ubiquitin-like modifier involved in autophagosomes formation. May mediate the delivery of the autophagosomes to the vacuole via the microtubule cytoskeleton. The polypeptide is Autophagy-related protein 8e (ATG8E) (Arabidopsis thaliana (Mouse-ear cress)).